The sequence spans 336 residues: tRNA(Ile)-lysidine synthase (336 aa).

Residue 32–37 (SGGQDS) coordinates ATP.

Belongs to the tRNA(Ile)-lysidine synthase family.

Its subcellular location is the cytoplasm. The catalysed reaction is cytidine(34) in tRNA(Ile2) + L-lysine + ATP = lysidine(34) in tRNA(Ile2) + AMP + diphosphate + H(+). Ligates lysine onto the cytidine present at position 34 of the AUA codon-specific tRNA(Ile) that contains the anticodon CAU, in an ATP-dependent manner. Cytidine is converted to lysidine, thus changing the amino acid specificity of the tRNA from methionine to isoleucine. The sequence is that of tRNA(Ile)-lysidine synthase from Synechococcus sp. (strain JA-3-3Ab) (Cyanobacteria bacterium Yellowstone A-Prime).